Here is a 345-residue protein sequence, read N- to C-terminus: Mycothiol acetyltransferase (345 aa).

N-acetyltransferase domains are found at residues 6–149 (DTYE…KAME) and 164–345 (FEVL…RGRL). Glu-39 contacts 1D-myo-inositol 2-(L-cysteinylamino)-2-deoxy-alpha-D-glucopyranoside. Acetyl-CoA is bound at residue 76–78 (LAV). Residues Glu-198, Lys-261, and Glu-277 each contribute to the 1D-myo-inositol 2-(L-cysteinylamino)-2-deoxy-alpha-D-glucopyranoside site. Acetyl-CoA is bound by residues 281–283 (VCL) and 288–294 (RGRGLGQ). A 1D-myo-inositol 2-(L-cysteinylamino)-2-deoxy-alpha-D-glucopyranoside-binding site is contributed by Tyr-315.

This sequence belongs to the acetyltransferase family. MshD subfamily. Monomer.

It carries out the reaction 1D-myo-inositol 2-(L-cysteinylamino)-2-deoxy-alpha-D-glucopyranoside + acetyl-CoA = mycothiol + CoA + H(+). In terms of biological role, catalyzes the transfer of acetyl from acetyl-CoA to desacetylmycothiol (Cys-GlcN-Ins) to form mycothiol. This Corynebacterium jeikeium (strain K411) protein is Mycothiol acetyltransferase.